The following is a 510-amino-acid chain: Laccase (510 aa).

Plastocyanin-like domains follow at residues 45-79 (PTKLWTYNGSLPGPTIKANRNEKVKVKWMNKLPLK), 99-174 (KTVV…LISD), 242-317 (YLEV…IVLK), and 372-506 (LTLT…MRPM). 4 residues coordinate Cu cation: His-103, His-105, His-151, and His-153. His-419, His-422, His-424, His-491, Cys-492, His-493, His-497, and Met-502 together coordinate Cu cation.

This sequence belongs to the multicopper oxidase family. The cofactor is Cu(2+).

The catalysed reaction is 4 hydroquinone + O2 = 4 benzosemiquinone + 2 H2O. Its activity is regulated as follows. Resistant to alkali and organic solvents such as methanol, ethanol and acetone. Resistant to EDTA, which might be explained by the spatial protection of copper ions in the active sites. Inhibited by DMSO. Strongly inhibited by Fe(2+) and DTT. Its function is as follows. Multicopper oxidase that catalyzes the oxidation of a variety of substrates, including phenolic and non-phenolic compounds. Substrates include 2,6-dimethoxyphenol (2,6-DMP) and the non-phenolic compound 2,2'-azino-bis(3-ethylbenzothiazoline-6-sulfonic acid) (ABTS). Cannot use guaiacol and catechol. The sequence is that of Laccase from Bacillus stratosphericus.